The sequence spans 399 residues: Flavohemoprotein (399 aa).

The Globin domain maps to 1–138 (MLAEKTRSII…IADIFITVEK (138 aa)). Residue T22 is modified to Phosphothreonine. H85 lines the heme b pocket. Active-site charge relay system residues include Y95 and E137. The interval 146–399 (WPGWKPFDIT…FGPKMSTVQV (254 aa)) is reductase. Residues 147-264 (PGWKPFDITA…SAPAGDFAIN (118 aa)) enclose the FAD-binding FR-type domain. FAD contacts are provided by residues Y189 and 207-210 (RHYS). 281–286 (GVGVTP) is a binding site for NADP(+). 389–392 (PFGP) is an FAD binding site.

This sequence belongs to the globin family. Two-domain flavohemoproteins subfamily. The protein in the C-terminal section; belongs to the flavoprotein pyridine nucleotide cytochrome reductase family. It depends on FAD as a cofactor. Requires heme b as cofactor.

It localises to the cytoplasm. The enzyme catalyses 2 nitric oxide + NADPH + 2 O2 = 2 nitrate + NADP(+) + H(+). It carries out the reaction 2 nitric oxide + NADH + 2 O2 = 2 nitrate + NAD(+) + H(+). Its function is as follows. Is involved in NO detoxification in an aerobic process, termed nitric oxide dioxygenase (NOD) reaction that utilizes O(2) and NAD(P)H to convert NO to nitrate, which protects the fungus from various noxious nitrogen compounds. Therefore, plays a central role in the inducible response to nitrosative stress. In the presence of oxygen and NADH, it has NADH oxidase activity, which leads to the generation of superoxide and H(2)O(2). Under anaerobic conditions, it also exhibits nitric oxide reductase and FAD reductase activities. However, all these reactions are much lower than NOD activity. The polypeptide is Flavohemoprotein (YHB1) (Saccharomyces cerevisiae (strain ATCC 204508 / S288c) (Baker's yeast)).